A 289-amino-acid polypeptide reads, in one-letter code: 4-diphosphocytidyl-2-C-methyl-D-erythritol kinase (289 aa).

Lysine 10 is an active-site residue. 94–104 (PVAAGLAGGSS) is a binding site for ATP. Aspartate 136 is a catalytic residue.

This sequence belongs to the GHMP kinase family. IspE subfamily.

The enzyme catalyses 4-CDP-2-C-methyl-D-erythritol + ATP = 4-CDP-2-C-methyl-D-erythritol 2-phosphate + ADP + H(+). It participates in isoprenoid biosynthesis; isopentenyl diphosphate biosynthesis via DXP pathway; isopentenyl diphosphate from 1-deoxy-D-xylulose 5-phosphate: step 3/6. Its function is as follows. Catalyzes the phosphorylation of the position 2 hydroxy group of 4-diphosphocytidyl-2C-methyl-D-erythritol. This is 4-diphosphocytidyl-2-C-methyl-D-erythritol kinase from Bacillus mycoides (strain KBAB4) (Bacillus weihenstephanensis).